Consider the following 300-residue polypeptide: Ribosomal protein L11 methyltransferase (300 aa).

4 residues coordinate S-adenosyl-L-methionine: Thr152, Gly173, Asp195, and Asn234.

Belongs to the methyltransferase superfamily. PrmA family.

It is found in the cytoplasm. The enzyme catalyses L-lysyl-[protein] + 3 S-adenosyl-L-methionine = N(6),N(6),N(6)-trimethyl-L-lysyl-[protein] + 3 S-adenosyl-L-homocysteine + 3 H(+). Its function is as follows. Methylates ribosomal protein L11. This chain is Ribosomal protein L11 methyltransferase, found in Paraburkholderia xenovorans (strain LB400).